We begin with the raw amino-acid sequence, 935 residues long: C-1-tetrahydrofolate synthase, cytoplasmic (935 aa).

The residue at position 1 (M1) is an N-acetylmethionine. Positions 2–291 (APAEILNGKE…MLMQSTVESA (290 aa)) are methylenetetrahydrofolate dehydrogenase and methenyltetrahydrofolate cyclohydrolase (D/C) domain. Substrate contacts are provided by residues 52–56 (YINVK) and 99–101 (VQL). Residue K56 is part of the active site. NADP(+)-binding positions include 172-174 (GRS) and S197. 272-276 (PGGVG) is a substrate binding site. Positions 310-935 (LNLKTPVPSD…PETEQVNGLF (626 aa)) are formyltetrahydrofolate synthetase domain. At S318 the chain carries Phosphoserine. ATP is bound at residue 380 to 387 (TPLGEGKS). Phosphoserine occurs at positions 413 and 490.

It in the N-terminal section; belongs to the tetrahydrofolate dehydrogenase/cyclohydrolase family. This sequence in the C-terminal section; belongs to the formate--tetrahydrofolate ligase family. Homodimer. As to expression, ubiquitous.

It is found in the cytoplasm. It carries out the reaction (6R)-5,10-methylene-5,6,7,8-tetrahydrofolate + NADP(+) = (6R)-5,10-methenyltetrahydrofolate + NADPH. The catalysed reaction is (6R)-5,10-methenyltetrahydrofolate + H2O = (6R)-10-formyltetrahydrofolate + H(+). It catalyses the reaction (6S)-5,6,7,8-tetrahydrofolate + formate + ATP = (6R)-10-formyltetrahydrofolate + ADP + phosphate. Its pathway is one-carbon metabolism; tetrahydrofolate interconversion. Trifunctional enzyme that catalyzes the interconversion of three forms of one-carbon-substituted tetrahydrofolate: (6R)-5,10-methylene-5,6,7,8-tetrahydrofolate, 5,10-methenyltetrahydrofolate and (6S)-10-formyltetrahydrofolate. These derivatives of tetrahydrofolate are differentially required in nucleotide and amino acid biosynthesis, (6S)-10-formyltetrahydrofolate being required for purine biosynthesis while (6R)-5,10-methylene-5,6,7,8-tetrahydrofolate is used for serine and methionine biosynthesis for instance. The sequence is that of C-1-tetrahydrofolate synthase, cytoplasmic (MTHFD1) from Homo sapiens (Human).